The chain runs to 197 residues: Dephospho-CoA kinase (197 aa).

A DPCK domain is found at 3–197 (VLGLTGSIGL…IDELRGQRGS (195 aa)). ATP is bound at residue 11–16 (GLGKST).

The protein belongs to the CoaE family.

The protein resides in the cytoplasm. The enzyme catalyses 3'-dephospho-CoA + ATP = ADP + CoA + H(+). It functions in the pathway cofactor biosynthesis; coenzyme A biosynthesis; CoA from (R)-pantothenate: step 5/5. Functionally, catalyzes the phosphorylation of the 3'-hydroxyl group of dephosphocoenzyme A to form coenzyme A. The polypeptide is Dephospho-CoA kinase (Mesorhizobium japonicum (strain LMG 29417 / CECT 9101 / MAFF 303099) (Mesorhizobium loti (strain MAFF 303099))).